We begin with the raw amino-acid sequence, 85 residues long: Small ribosomal subunit protein uS17 (85 aa).

Belongs to the universal ribosomal protein uS17 family. As to quaternary structure, part of the 30S ribosomal subunit.

Functionally, one of the primary rRNA binding proteins, it binds specifically to the 5'-end of 16S ribosomal RNA. This chain is Small ribosomal subunit protein uS17, found in Lachnospira eligens (strain ATCC 27750 / DSM 3376 / VPI C15-48 / C15-B4) (Eubacterium eligens).